A 213-amino-acid chain; its full sequence is ATP phosphoribosyltransferase (213 aa).

The protein belongs to the ATP phosphoribosyltransferase family. Short subfamily. In terms of assembly, heteromultimer composed of HisG and HisZ subunits.

Its subcellular location is the cytoplasm. The enzyme catalyses 1-(5-phospho-beta-D-ribosyl)-ATP + diphosphate = 5-phospho-alpha-D-ribose 1-diphosphate + ATP. It participates in amino-acid biosynthesis; L-histidine biosynthesis; L-histidine from 5-phospho-alpha-D-ribose 1-diphosphate: step 1/9. Catalyzes the condensation of ATP and 5-phosphoribose 1-diphosphate to form N'-(5'-phosphoribosyl)-ATP (PR-ATP). Has a crucial role in the pathway because the rate of histidine biosynthesis seems to be controlled primarily by regulation of HisG enzymatic activity. This is ATP phosphoribosyltransferase from Listeria monocytogenes serotype 4b (strain F2365).